The chain runs to 308 residues: GTPase Era (308 aa).

In terms of domain architecture, Era-type G spans arginine 14–glutamate 181. The tract at residues glycine 22–serine 29 is G1. Glycine 22–serine 29 is a GTP binding site. Positions glutamine 48 to alanine 52 are G2. Residues aspartate 69–glycine 72 are G3. GTP is bound by residues aspartate 69 to isoleucine 73 and asparagine 131 to aspartate 134. The interval asparagine 131–aspartate 134 is G4. Residues valine 160–alanine 162 form a G5 region. Positions leucine 212 to aspartate 289 constitute a KH type-2 domain.

This sequence belongs to the TRAFAC class TrmE-Era-EngA-EngB-Septin-like GTPase superfamily. Era GTPase family. In terms of assembly, monomer.

It is found in the cytoplasm. The protein resides in the cell inner membrane. In terms of biological role, an essential GTPase that binds both GDP and GTP, with rapid nucleotide exchange. Plays a role in 16S rRNA processing and 30S ribosomal subunit biogenesis and possibly also in cell cycle regulation and energy metabolism. The chain is GTPase Era from Afipia carboxidovorans (strain ATCC 49405 / DSM 1227 / KCTC 32145 / OM5) (Oligotropha carboxidovorans).